The chain runs to 251 residues: 5'-nucleotidase SurE (251 aa).

4 residues coordinate a divalent metal cation: Asp-8, Asp-9, Ser-39, and Asn-95.

Belongs to the SurE nucleotidase family. A divalent metal cation is required as a cofactor.

The protein resides in the cytoplasm. It carries out the reaction a ribonucleoside 5'-phosphate + H2O = a ribonucleoside + phosphate. In terms of biological role, nucleotidase that shows phosphatase activity on nucleoside 5'-monophosphates. This Clostridium botulinum (strain Alaska E43 / Type E3) protein is 5'-nucleotidase SurE.